Consider the following 339-residue polypeptide: Ketol-acid reductoisomerase (NADP(+)) (339 aa).

A KARI N-terminal Rossmann domain is found at 1–182 (MRVYYDRDAD…GGGRAGIIET (182 aa)). Residues 24–27 (YGSQ), arginine 48, serine 51, serine 53, and 83–86 (DELQ) contribute to the NADP(+) site. The active site involves histidine 108. Residue glycine 134 participates in NADP(+) binding. Residues 183–328 (TFKEECETDL…ERLRGMMPWI (146 aa)) enclose the KARI C-terminal knotted domain. Mg(2+) is bound by residues aspartate 191, glutamate 195, glutamate 227, and glutamate 231. Serine 252 contributes to the substrate binding site.

The protein belongs to the ketol-acid reductoisomerase family. Requires Mg(2+) as cofactor.

The catalysed reaction is (2R)-2,3-dihydroxy-3-methylbutanoate + NADP(+) = (2S)-2-acetolactate + NADPH + H(+). It catalyses the reaction (2R,3R)-2,3-dihydroxy-3-methylpentanoate + NADP(+) = (S)-2-ethyl-2-hydroxy-3-oxobutanoate + NADPH + H(+). The protein operates within amino-acid biosynthesis; L-isoleucine biosynthesis; L-isoleucine from 2-oxobutanoate: step 2/4. Its pathway is amino-acid biosynthesis; L-valine biosynthesis; L-valine from pyruvate: step 2/4. Involved in the biosynthesis of branched-chain amino acids (BCAA). Catalyzes an alkyl-migration followed by a ketol-acid reduction of (S)-2-acetolactate (S2AL) to yield (R)-2,3-dihydroxy-isovalerate. In the isomerase reaction, S2AL is rearranged via a Mg-dependent methyl migration to produce 3-hydroxy-3-methyl-2-ketobutyrate (HMKB). In the reductase reaction, this 2-ketoacid undergoes a metal-dependent reduction by NADPH to yield (R)-2,3-dihydroxy-isovalerate. The protein is Ketol-acid reductoisomerase (NADP(+)) of Methylobacterium sp. (strain 4-46).